A 221-amino-acid polypeptide reads, in one-letter code: Chaperone protein TorD (221 aa).

This sequence belongs to the TorD/DmsD family. TorD subfamily.

It localises to the cytoplasm. Functionally, involved in the biogenesis of TorA. Acts on TorA before the insertion of the molybdenum cofactor and, as a result, probably favors a conformation of the apoenzyme that is competent for acquiring the cofactor. The polypeptide is Chaperone protein TorD (Shewanella pealeana (strain ATCC 700345 / ANG-SQ1)).